A 2284-amino-acid chain; its full sequence is RNA1 polyprotein (2284 aa).

Residues 567–1172 (CTAEEIFRMH…LVENYSLLLT (606 aa)) are Cytoplasmic-facing. The SF3 helicase domain occupies 750 to 918 (VSKLEEVHQR…DNTHFTPRAY (169 aa)). ATP is bound at residue 780–787 (GASQSGKT). A helical transmembrane segment spans residues 1173–1193 (LVAILVLIATAYSLISTLIGL). At 1194 to 1216 (AGCSSFAGGMVALNHVSNASIPC) the chain is on the lumenal side. S1217 is subject to O-(5'-phospho-RNA)-serine. The region spanning 1242-1457 (GPAQGQGDHE…SVIPSYSSSF (216 aa)) is the Peptidase C3 domain. Catalysis depends on for picornain 3C-like protease activity residues H1283, E1327, and C1419. The RdRp catalytic domain occupies 1727-1851 (DVGYNCDYKG…TVSQSIMTSF (125 aa)).

It belongs to the nepoviruses RNA1 polyprotein family. Specific enzymatic cleavages by picornain 3C-like protease in vivo yield mature proteins. Picornain 3C-like protease is autocatalytically processed. In terms of processing, VPg is uridylylated by the polymerase and is covalently linked to the 5'-end of genomic RNA. This uridylylated form acts as a nucleotide-peptide primer for the polymerase.

Its subcellular location is the host endoplasmic reticulum lumen. The protein localises to the host endoplasmic reticulum membrane. The enzyme catalyses RNA(n) + a ribonucleoside 5'-triphosphate = RNA(n+1) + diphosphate. In terms of biological role, picornain 3C-like protease is a thiol protease that cleaves the P1 and P2 polyproteins. In Vitis vinifera (Grape), this protein is RNA1 polyprotein.